A 406-amino-acid polypeptide reads, in one-letter code: 4-hydroxy-3-methylbut-2-en-1-yl diphosphate synthase (flavodoxin) (406 aa).

The [4Fe-4S] cluster site is built by C297, C300, C343, and E350.

Belongs to the IspG family. Homodimer. [4Fe-4S] cluster serves as cofactor.

The enzyme catalyses (2E)-4-hydroxy-3-methylbut-2-enyl diphosphate + oxidized [flavodoxin] + H2O + 2 H(+) = 2-C-methyl-D-erythritol 2,4-cyclic diphosphate + reduced [flavodoxin]. Its pathway is isoprenoid biosynthesis; isopentenyl diphosphate biosynthesis via DXP pathway; isopentenyl diphosphate from 1-deoxy-D-xylulose 5-phosphate: step 5/6. Functionally, converts 2C-methyl-D-erythritol 2,4-cyclodiphosphate (ME-2,4cPP) into 1-hydroxy-2-methyl-2-(E)-butenyl 4-diphosphate. The chain is 4-hydroxy-3-methylbut-2-en-1-yl diphosphate synthase (flavodoxin) from Thermus thermophilus (strain ATCC BAA-163 / DSM 7039 / HB27).